A 475-amino-acid chain; its full sequence is tRNA-2-methylthio-N(6)-dimethylallyladenosine synthase (475 aa).

Residues 1 to 10 show a composition bias toward basic and acidic residues; sequence MQETTVKRDG. Residues 1-22 form a disordered region; that stretch reads MQETTVKRDGASPSDAGTPATT. Residues 27 to 144 enclose the MTTase N-terminal domain; the sequence is GKLYIRTFGC…LPDLIKRRRA (118 aa). [4Fe-4S] cluster is bound by residues Cys-36, Cys-73, Cys-107, Cys-181, Cys-185, and Cys-188. Residues 167–400 form the Radical SAM core domain; sequence RVDGATAFVS…QALINQQAAA (234 aa). The region spanning 403–466 is the TRAM domain; it reads QGMIGTRQRV…TNSLRGRVAG (64 aa).

Belongs to the methylthiotransferase family. MiaB subfamily. In terms of assembly, monomer. It depends on [4Fe-4S] cluster as a cofactor.

It localises to the cytoplasm. The catalysed reaction is N(6)-dimethylallyladenosine(37) in tRNA + (sulfur carrier)-SH + AH2 + 2 S-adenosyl-L-methionine = 2-methylsulfanyl-N(6)-dimethylallyladenosine(37) in tRNA + (sulfur carrier)-H + 5'-deoxyadenosine + L-methionine + A + S-adenosyl-L-homocysteine + 2 H(+). In terms of biological role, catalyzes the methylthiolation of N6-(dimethylallyl)adenosine (i(6)A), leading to the formation of 2-methylthio-N6-(dimethylallyl)adenosine (ms(2)i(6)A) at position 37 in tRNAs that read codons beginning with uridine. The chain is tRNA-2-methylthio-N(6)-dimethylallyladenosine synthase from Bordetella parapertussis (strain 12822 / ATCC BAA-587 / NCTC 13253).